The chain runs to 210 residues: Uracil phosphoribosyltransferase (210 aa).

5-phospho-alpha-D-ribose 1-diphosphate contacts are provided by residues Arg80, Arg105, and 132–140; that span reads DPMLATGGS. Uracil is bound by residues Ile195 and 200–202; that span reads GDA. Residue Asp201 coordinates 5-phospho-alpha-D-ribose 1-diphosphate.

The protein belongs to the UPRTase family. Mg(2+) is required as a cofactor.

It carries out the reaction UMP + diphosphate = 5-phospho-alpha-D-ribose 1-diphosphate + uracil. Its pathway is pyrimidine metabolism; UMP biosynthesis via salvage pathway; UMP from uracil: step 1/1. Its activity is regulated as follows. Allosterically activated by GTP. Functionally, catalyzes the conversion of uracil and 5-phospho-alpha-D-ribose 1-diphosphate (PRPP) to UMP and diphosphate. The chain is Uracil phosphoribosyltransferase from Deinococcus radiodurans (strain ATCC 13939 / DSM 20539 / JCM 16871 / CCUG 27074 / LMG 4051 / NBRC 15346 / NCIMB 9279 / VKM B-1422 / R1).